We begin with the raw amino-acid sequence, 119 residues long: Large ribosomal subunit protein uL24 (119 aa).

The protein belongs to the universal ribosomal protein uL24 family. As to quaternary structure, part of the 50S ribosomal subunit.

Its function is as follows. One of two assembly initiator proteins, it binds directly to the 5'-end of the 23S rRNA, where it nucleates assembly of the 50S subunit. One of the proteins that surrounds the polypeptide exit tunnel on the outside of the subunit. In Arthrobacter sp. (strain FB24), this protein is Large ribosomal subunit protein uL24.